The following is a 196-amino-acid chain: V-type proton ATPase subunit E (196 aa).

The protein belongs to the V-ATPase E subunit family.

Produces ATP from ADP in the presence of a proton gradient across the membrane. The polypeptide is V-type proton ATPase subunit E (Clostridium botulinum (strain Eklund 17B / Type B)).